We begin with the raw amino-acid sequence, 376 residues long: MKNQKTVVVGMSGGVDSSVSALLMKEQGYNVIGLFMKNWEEKDENGVCSSAQDYDDVRRVCDHINIPYYAVNFVENYRKQVFTQFIADFQKGWTPNPDILCNREIKFKVFLEKALELGADFLATGHYCQNLILDKGSPSLVKGIDHNKDQTYFLYTLNQQILQQVLFPVGGLEKSQVRDIARKHQLVTAEKKDSTGICFIGERDFRSFLSQYVAIQPGAFQTLQGKNVGKHMGTAYYTLGQRKGLGIGGAGEAWFVVGKDHERGIVFVEQGANHPALYCDELIATDLSWVAEAPLLPYTCQSKVRYRQNDQFCTIHRIENGKAFVTFDRPQRAVTPGQSIVFYVGNICLGGGVIQQPGPTYYDQKKSLPHQSPRND.

Residues 10 to 17 (GMSGGVDS) and Met-36 contribute to the ATP site. The tract at residues 96 to 98 (NPD) is interaction with target base in tRNA. Cys-101 acts as the Nucleophile in catalysis. Cys-101 and Cys-198 are disulfide-bonded. ATP is bound at residue Gly-125. The interaction with tRNA stretch occupies residues 148–150 (KDQ). Residue Cys-198 is the Cysteine persulfide intermediate of the active site. The tract at residues 305–306 (RY) is interaction with tRNA.

This sequence belongs to the MnmA/TRMU family.

The protein resides in the cytoplasm. The enzyme catalyses S-sulfanyl-L-cysteinyl-[protein] + uridine(34) in tRNA + AH2 + ATP = 2-thiouridine(34) in tRNA + L-cysteinyl-[protein] + A + AMP + diphosphate + H(+). Catalyzes the 2-thiolation of uridine at the wobble position (U34) of tRNA, leading to the formation of s(2)U34. The protein is tRNA-specific 2-thiouridylase MnmA of Protochlamydia amoebophila (strain UWE25).